We begin with the raw amino-acid sequence, 215 residues long: Small ribosomal subunit protein uS7 (215 aa).

This sequence belongs to the universal ribosomal protein uS7 family. In terms of assembly, part of the 30S ribosomal subunit.

Its function is as follows. One of the primary rRNA binding proteins, it binds directly to 16S rRNA where it nucleates assembly of the head domain of the 30S subunit. Is located at the subunit interface close to the decoding center. This chain is Small ribosomal subunit protein uS7, found in Pyrococcus furiosus (strain ATCC 43587 / DSM 3638 / JCM 8422 / Vc1).